We begin with the raw amino-acid sequence, 360 residues long: Peptide chain release factor 1 (360 aa).

N5-methylglutamine is present on Gln235. Positions 285-313 (KRQQAEASTRRNLLGSGDRSDRNRTYNFP) are disordered.

This sequence belongs to the prokaryotic/mitochondrial release factor family. In terms of processing, methylated by PrmC. Methylation increases the termination efficiency of RF1.

The protein localises to the cytoplasm. In terms of biological role, peptide chain release factor 1 directs the termination of translation in response to the peptide chain termination codons UAG and UAA. The chain is Peptide chain release factor 1 from Enterobacter sp. (strain 638).